The sequence spans 457 residues: Multidrug resistance protein MdtK (457 aa).

12 helical membrane passes run 11-31 (LLAL…MGFV), 53-73 (IWLP…PVIA), 93-113 (WLAG…GYII), 127-147 (AVGY…FQVA), 160-180 (GMVM…IFIY), 188-208 (LGGI…FIAM), 243-263 (LPIA…ALLV), 276-296 (IALN…AAVT), 314-334 (AART…IFTV), 350-370 (VVAL…SDSI), 387-407 (IFFI…YILA), and 418-438 (PAGF…LMML).

The protein belongs to the multi antimicrobial extrusion (MATE) (TC 2.A.66.1) family. MdtK subfamily.

It is found in the cell inner membrane. Multidrug efflux pump that functions probably as a Na(+)/drug antiporter. This Salmonella agona (strain SL483) protein is Multidrug resistance protein MdtK.